Consider the following 375-residue polypeptide: uncharacterized protein (375 aa).

The span at 1–12 (MAGNKKQVKKNT) shows a compositional bias: basic residues. Disordered stretches follow at residues 1–76 (MAGN…EKKS) and 119–274 (KNKN…KEIK). The span at 26 to 39 (DTSNLDTAVQTSAS) shows a compositional bias: polar residues. Residues 129–141 (TATDGTTTTTNIP) show a composition bias toward low complexity. Residues 175 to 185 (DETHSHKEEPK) show a composition bias toward basic and acidic residues. 2 stretches are compositionally biased toward low complexity: residues 198-212 (SKQQ…SSSS) and 225-241 (PTPT…KSTP). Residues 256–274 (EQPKEKSSPAPVKKEKEIK) show a composition bias toward basic and acidic residues. 2 helical membrane-spanning segments follow: residues 299 to 319 (VVYK…LVPL) and 327 to 347 (IYSY…TLFI). The interval 355–375 (ASKEQKSKSGNKKSTTRKVKA) is disordered. Basic residues predominate over residues 363 to 375 (SGNKKSTTRKVKA).

The protein localises to the membrane. This is an uncharacterized protein from Dictyostelium discoideum (Social amoeba).